The primary structure comprises 784 residues: Armadillo repeat-containing X-linked protein 2 (784 aa).

Over 1 to 6 (MSRARD) the chain is Mitochondrial intermembrane. 2 mitochondrion outer membrane (MOM)-targeting sequence regions span residues 1–6 (MSRARD) and 26–40 (KYTR…RLTK). The helical; Signal-anchor transmembrane segment at 7–27 (AGCVAAGIVIGASAWYCVYKY) threads the bilayer. Topologically, residues 28–784 (TRGKDQKKKR…VKVIKLVNKF (757 aa)) are cytoplasmic. Disordered regions lie at residues 328-353 (TSGG…RTAS), 388-461 (HSGA…ELGM), and 488-522 (PESE…TIPM). Positions 396–418 (GTSGSSKTAATGKKAAPGAHTGA) are enriched in low complexity. Acidic residues predominate over residues 488–508 (PESEEGESGWTDTESDSDSEP). ARM repeat units lie at residues 528–568 (PYEI…NNAN), 570–609 (SCNQ…NLSE), and 650–689 (ITND…NFAE).

Belongs to the eutherian X-chromosome-specific Armcx family. Widely expressed in the adult nervous tissue, especially in the forebrain, including the cerebral cortex, hippocampus and thalamus.

The protein localises to the mitochondrion. It localises to the mitochondrion outer membrane. Its function is as follows. May regulate the dynamics and distribution of mitochondria in neural cells. The sequence is that of Armadillo repeat-containing X-linked protein 2 (Armcx2) from Mus musculus (Mouse).